We begin with the raw amino-acid sequence, 92 residues long: Small ribosomal subunit protein uS19 (92 aa).

Belongs to the universal ribosomal protein uS19 family.

In terms of biological role, protein S19 forms a complex with S13 that binds strongly to the 16S ribosomal RNA. The chain is Small ribosomal subunit protein uS19 (rpsS) from Rickettsia prowazekii (strain Madrid E).